Consider the following 429-residue polypeptide: Phosphoribosylamine--glycine ligase (429 aa).

Positions K109–D316 constitute an ATP-grasp domain. Residue V135–S196 coordinates ATP. The interval S212–S234 is disordered. Residues Q213–T223 show a composition bias toward basic and acidic residues. Residues E286 and N288 each contribute to the Mg(2+) site.

Belongs to the GARS family. Requires Mg(2+) as cofactor. Mn(2+) serves as cofactor.

It catalyses the reaction 5-phospho-beta-D-ribosylamine + glycine + ATP = N(1)-(5-phospho-beta-D-ribosyl)glycinamide + ADP + phosphate + H(+). The protein operates within purine metabolism; IMP biosynthesis via de novo pathway; N(1)-(5-phospho-D-ribosyl)glycinamide from 5-phospho-alpha-D-ribose 1-diphosphate: step 2/2. The chain is Phosphoribosylamine--glycine ligase from Vibrio vulnificus (strain YJ016).